A 281-amino-acid polypeptide reads, in one-letter code: Para-Rep C9 (281 aa).

The region spanning 1–95 is the CRESS-DNA virus Rep endonuclease domain; that stretch reads MSAVNWVFTL…VAGPWSYGEL (95 aa). The RCR-1 motif lies at 7 to 10; it reads VFTL. 2 residues coordinate a divalent metal cation: Glu-33 and His-39. Positions 39-41 match the RCR-2 motif; it reads HIQ. The Nuclear localization signal signature appears at 48–69; that stretch reads KKAKMNTVKNIIGGNPHLEKMK. Catalysis depends on Tyr-78, which acts as the For DNA cleavage activity. The short motif at 78–81 is the RCR-3 element; the sequence is YAQK. Glu-83 lines the a divalent metal cation pocket. The Nuclear localization signal motif lies at 95 to 101; it reads LLKKGSH. ATP is bound at residue 178–180; it reads GKS.

The protein belongs to the nanoviridea/circoviridae replication-associated protein family. Homooligomer (Potential). Rep binds to repeated DNA motifs (iterons). Requires Mg(2+) as cofactor. Mn(2+) is required as a cofactor.

The protein resides in the host nucleus. It carries out the reaction ATP + H2O = ADP + phosphate + H(+). Its function is as follows. Initiates and terminates the replication only of its own subviral DNA molecule. The closed circular ssDNA genome is first converted to a superhelical dsDNA. Rep binds a specific hairpin at the genome origin of replication. Introduces an endonucleolytic nick within the intergenic region of the genome, thereby initiating the rolling circle replication (RCR). Following cleavage, binds covalently to the 5'-phosphate of DNA as a tyrosyl ester. The cleavage gives rise to a free 3'-OH that serves as a primer for the cellular DNA polymerase. The polymerase synthesizes the (+) strand DNA by rolling circle mechanism. After one round of replication, a Rep-catalyzed nucleotidyl transfer reaction releases a circular single-stranded virus genome, thereby terminating the replication. Displays origin-specific DNA cleavage, nucleotidyl transferase, ATPase and helicase activities. The polypeptide is Para-Rep C9 (C9) (Faba bean necrotic yellows C9 alphasatellite (FBNYC9A)).